A 676-amino-acid polypeptide reads, in one-letter code: Electrogenic aspartate/glutamate antiporter SLC25A13, mitochondrial (676 aa).

At A2 the chain carries N-acetylalanine. The regulatory N-terminal domain stretch occupies residues 2–295 (AAAKVALTKR…TLADIERIAP (294 aa)). The Mitochondrial intermembrane portion of the chain corresponds to 2 to 332 (AAAKVALTKR…LLQLAESAYR (331 aa)). K18 is subject to N6-acetyllysine. EF-hand domains are found at residues 51 to 86 (SQPN…SVLC), 87 to 122 (APDA…TTIH), 123 to 157 (QHIP…FLLE), and 158 to 193 (IQLE…IRPH). D66, T68, D70, L72, and E77 together coordinate Ca(2+). Residues 296–311 (LEEGMLPFNLAEAQRQ) are linker loop domain. The carrier domain stretch occupies residues 322 to 613 (FLLQLAESAY…LQRWFYVDFG (292 aa)). Solcar repeat units lie at residues 327–419 (AESA…VRDK), 427–511 (VPLL…VKAS), and 519–607 (VSPG…LQRW). A helical transmembrane segment spans residues 333–350 (FGLGSIAGAVGATAVYPI). Residues 351-393 (DLVKTRMQNQRSTGSFVGELMYKNSFDCFKKVLRYEGFFGLYR) lie on the Mitochondrial matrix side of the membrane. Residues K354 and K373 each carry the N6-acetyllysine modification. The chain crosses the membrane as a helical span at residues 394 to 413 (GLLPQLLGVAPEKAIKLTVN). Topologically, residues 414–436 (DFVRDKFMHKDGSVPLLAEIFAG) are mitochondrial intermembrane. Residues 437–450 (GCAGGSQVIFTNPL) form a helical membrane-spanning segment. Topologically, residues 451–485 (EIVKIRLQVAGEITTGPRVSALSVVRDLGFFGIYK) are mitochondrial matrix. Position 454 is an N6-methyllysine (K454). Position 485 is an N6-acetyllysine; alternate (K485). The residue at position 485 (K485) is an N6-succinyllysine; alternate. The chain crosses the membrane as a helical span at residues 486–505 (GAKACFLRDIPFSAIYFPCY). Residues 506-524 (AHVKASFANEDGQVSPGSL) lie on the Mitochondrial intermembrane side of the membrane. Residues 525–542 (LLAGAIAGMPAASLVTPA) traverse the membrane as a helical segment. Topologically, residues 543 to 581 (DVIKTRLQVAARAGQTTYNGVTDCFRKILREEGPKALWK) are mitochondrial matrix. K581 carries the post-translational modification N6-succinyllysine. A helical transmembrane segment spans residues 582-601 (GVAARVFRSSPQFGVTLLTY). Residues 602 to 676 (ELLQRWFYVD…STSKVTAGDS (75 aa)) are Mitochondrial intermembrane-facing. The tract at residues 614 to 676 (GVKPVGSEPV…STSKVTAGDS (63 aa)) is C-terminal domain. An N6-acetyllysine modification is found at K663. Phosphoserine is present on S667.

Belongs to the mitochondrial carrier (TC 2.A.29) family. As to quaternary structure, homodimer (via N-terminus). In terms of tissue distribution, at 10.5 dpc, expressed in branchial arches, a well as in the limb and tail buds. At 13.5 dpc expression is predominant in epithelial structures and the forebrain, kidney and liver. Expression in liver is maintained into adulthood.

It localises to the mitochondrion inner membrane. It catalyses the reaction L-aspartate(in) + L-glutamate(out) + H(+)(out) = L-aspartate(out) + L-glutamate(in) + H(+)(in). The catalysed reaction is 3-sulfino-L-alanine(out) + L-glutamate(in) + H(+)(in) = 3-sulfino-L-alanine(in) + L-glutamate(out) + H(+)(out). It carries out the reaction 3-sulfino-L-alanine(out) + L-aspartate(in) = 3-sulfino-L-alanine(in) + L-aspartate(out). Its function is as follows. Mitochondrial electrogenic aspartate/glutamate antiporter that favors efflux of aspartate and entry of glutamate and proton within the mitochondria as part of the malate-aspartate shuttle. Also mediates the uptake of L-cysteinesulfinate (3-sulfino-L-alanine) by mitochondria in exchange of L-glutamate and proton. Can also exchange L-cysteinesulfinate with aspartate in their anionic form without any proton translocation. Lacks transport activity towards gamma-aminobutyric acid (GABA). This is Electrogenic aspartate/glutamate antiporter SLC25A13, mitochondrial from Mus musculus (Mouse).